A 274-amino-acid polypeptide reads, in one-letter code: Penicillin-insensitive murein endopeptidase (274 aa).

An N-terminal signal peptide occupies residues 1-19 (MKKTAIALLAWFVSSASLA). 3 disulfides stabilise this stretch: cysteine 44-cysteine 265, cysteine 187-cysteine 235, and cysteine 216-cysteine 223. Residues histidine 110, histidine 113, aspartate 120, aspartate 147, histidine 150, and histidine 211 each coordinate Zn(2+). The disordered stretch occupies residues 225 to 274 (DQPLPPPGDGCGAELQSWFEPPKPGTTKPEKKTPPPLPPSCQALLDEHVL).

Belongs to the peptidase M74 family. Dimer. Zn(2+) is required as a cofactor.

The protein localises to the periplasm. Murein endopeptidase that cleaves the D-alanyl-meso-2,6-diamino-pimelyl amide bond that connects peptidoglycan strands. Likely plays a role in the removal of murein from the sacculus. In Salmonella paratyphi A (strain AKU_12601), this protein is Penicillin-insensitive murein endopeptidase.